Here is a 314-residue protein sequence, read N- to C-terminus: Ferrochelatase (314 aa).

The Fe cation site is built by H184 and E259.

Belongs to the ferrochelatase family.

It localises to the cytoplasm. It carries out the reaction heme b + 2 H(+) = protoporphyrin IX + Fe(2+). The protein operates within porphyrin-containing compound metabolism; protoheme biosynthesis; protoheme from protoporphyrin-IX: step 1/1. Catalyzes the ferrous insertion into protoporphyrin IX. The polypeptide is Ferrochelatase (Chlamydia trachomatis serovar D (strain ATCC VR-885 / DSM 19411 / UW-3/Cx)).